The chain runs to 72 residues: Translation initiation factor IF-1 (72 aa).

The S1-like domain maps to 1–72 (MAKEDVIEIE…TRGRITYRFK (72 aa)).

It belongs to the IF-1 family. Component of the 30S ribosomal translation pre-initiation complex which assembles on the 30S ribosome in the order IF-2 and IF-3, IF-1 and N-formylmethionyl-tRNA(fMet); mRNA recruitment can occur at any time during PIC assembly.

Its subcellular location is the cytoplasm. In terms of biological role, one of the essential components for the initiation of protein synthesis. Stabilizes the binding of IF-2 and IF-3 on the 30S subunit to which N-formylmethionyl-tRNA(fMet) subsequently binds. Helps modulate mRNA selection, yielding the 30S pre-initiation complex (PIC). Upon addition of the 50S ribosomal subunit IF-1, IF-2 and IF-3 are released leaving the mature 70S translation initiation complex. This chain is Translation initiation factor IF-1, found in Streptococcus agalactiae serotype Ia (strain ATCC 27591 / A909 / CDC SS700).